A 368-amino-acid chain; its full sequence is o-succinylbenzoate synthase (368 aa).

The active-site Proton donor is the K183. D213, E239, and D264 together coordinate Mg(2+). Catalysis depends on K290, which acts as the Proton acceptor.

It belongs to the mandelate racemase/muconate lactonizing enzyme family. MenC type 1 subfamily. In terms of assembly, monomer. Requires a divalent metal cation as cofactor.

The enzyme catalyses (1R,6R)-6-hydroxy-2-succinyl-cyclohexa-2,4-diene-1-carboxylate = 2-succinylbenzoate + H2O. It participates in quinol/quinone metabolism; 1,4-dihydroxy-2-naphthoate biosynthesis; 1,4-dihydroxy-2-naphthoate from chorismate: step 4/7. It functions in the pathway cofactor biosynthesis; phylloquinone biosynthesis. Functionally, converts 2-succinyl-6-hydroxy-2,4-cyclohexadiene-1-carboxylate (SHCHC) to 2-succinylbenzoate (OSB). Does not show N-succinylamino acid racemase (NSAR) activity with N-succinyl-L-phenylglycine as substrate. The chain is o-succinylbenzoate synthase from Desulfotalea psychrophila (strain LSv54 / DSM 12343).